A 158-amino-acid polypeptide reads, in one-letter code: UPF0098 protein YbhB (158 aa).

Belongs to the UPF0098 family. Homodimer.

Its subcellular location is the cytoplasm. This is UPF0098 protein YbhB (ybhB) from Escherichia coli (strain K12).